A 445-amino-acid polypeptide reads, in one-letter code: Phosphoglucosamine mutase (445 aa).

Ser102 (phosphoserine intermediate) is an active-site residue. Mg(2+)-binding residues include Ser102, Asp241, Asp243, and Asp245. Position 102 is a phosphoserine (Ser102).

It belongs to the phosphohexose mutase family. The cofactor is Mg(2+). In terms of processing, activated by phosphorylation.

The catalysed reaction is alpha-D-glucosamine 1-phosphate = D-glucosamine 6-phosphate. Its function is as follows. Catalyzes the conversion of glucosamine-6-phosphate to glucosamine-1-phosphate. The polypeptide is Phosphoglucosamine mutase (Haemophilus influenzae (strain PittEE)).